The chain runs to 724 residues: Polyribonucleotide nucleotidyltransferase (724 aa).

Mg(2+) is bound by residues D488 and D494. Residues 555-614 (PRMITVKINPEKIRDVIGKGGSTIQALTKETGCTIDIGEDGTITIASTSSEGMAEAKRRI) enclose the KH domain. The S1 motif domain maps to 624 to 692 (GKIYNGTVLK…EKGRMRLSIK (69 aa)). Residues 697-724 (EEGDVPVAAPQAPGAGDAASQQQQQQQQ) form a disordered region. A compositionally biased stretch (low complexity) spans 701 to 724 (VPVAAPQAPGAGDAASQQQQQQQQ).

The protein belongs to the polyribonucleotide nucleotidyltransferase family. Mg(2+) is required as a cofactor.

It localises to the cytoplasm. The catalysed reaction is RNA(n+1) + phosphate = RNA(n) + a ribonucleoside 5'-diphosphate. Functionally, involved in mRNA degradation. Catalyzes the phosphorolysis of single-stranded polyribonucleotides processively in the 3'- to 5'-direction. This Ralstonia pickettii (strain 12J) protein is Polyribonucleotide nucleotidyltransferase.